The following is a 146-amino-acid chain: Mite group 2 allergen Der f 2 (146 aa).

Positions 1 to 17 (MISKILCLSLLVAAVVA) are cleaved as a signal peptide. Disulfide bonds link Cys25-Cys136, Cys38-Cys44, and Cys90-Cys95.

The protein belongs to the NPC2 family.

It localises to the secreted. The polypeptide is Mite group 2 allergen Der f 2 (DERF2) (Dermatophagoides farinae (American house dust mite)).